Reading from the N-terminus, the 219-residue chain is Lipid transferase CIDEB (219 aa).

Residues Pro33–Pro110 enclose the CIDE-N domain.

Belongs to the CIDE family. In terms of assembly, interacts with DFFA. Interacts with DFFB; inhibited by DFFB. Interacts with APOB. Interacts with PREB/SEC12; facilitating loading of SCAP-SREBP into COPII vesicles.

It localises to the lipid droplet. It is found in the endoplasmic reticulum membrane. Its subcellular location is the golgi apparatus. The protein localises to the cytoplasmic vesicle. The protein resides in the COPI-coated vesicle. Lipid transferase specifically expressed in hepatocytes, which promotes unilocular lipid droplet formation by mediating lipid droplet fusion. Lipid droplet fusion promotes their enlargement, restricting lipolysis and favoring lipid storage. Localizes on the lipid droplet surface, at focal contact sites between lipid droplets, and mediates atypical lipid droplet fusion by promoting directional net neutral lipid transfer from the smaller to larger lipid droplets. The transfer direction may be driven by the internal pressure difference between the contacting lipid droplet pair. Promotes lipid exchange and lipid droplet fusion in both small and large lipid droplet-containing hepatocytes. In addition to its role in lipid droplet fusion, also involved in cytoplasmic vesicle biogenesis and transport. Required for very-low-density lipoprotein (VLDL) lipidation and maturation. Probably involved in the biogenesis of VLDL transport vesicles by forming a COPII vesicle coat and facilitating the formation of endoplasmic reticulum-derived large vesicles. Also involved in sterol-regulated export of the SCAP-SREBP complex, composed of SCAP, SREBF1/SREBP1 and SREBF2/SREBP2, by promoting loading of SCAP-SREBP into COPII vesicles. May also activate apoptosis. This is Lipid transferase CIDEB (CIDEB) from Bos taurus (Bovine).